The following is a 408-amino-acid chain: MPIKILMPALSPTMREGNLARWLKKEGDKVNPGEVIAEIETDKATMEVESVDEGILAKIIIPQNSQNVPVNSLIAVLSEEGEDKADIDSFIAQNNSVSLSLKTDATLKKSNDSITNVEGIKHDSNKIFASPLAKRLAKIGDIRLENVQGSGPHGRIVKQDILSYDSSTSSNKIVYRDTEEYRSVPNNNIRKIIAKRLLESKQTVPHFYLSIECNVDKLLDVREDINKSFSEDKVTKISVNDFIILAVAKALQEVPNANASWSEDAIRYYNNVDISVAVAIENGIVTPIVKDANKKNIIELSREMKTLIKKAKDNKLTPIEFQGGGFTISNLGMYGIKNFNAIINTPQSCIMGVGASTKRAIVKNDQIIIATIMDVTLSADHRVIDGAVSAEFLASFKRFIENPVLMLI.

In terms of domain architecture, Lipoyl-binding spans 2–78 (PIKILMPALS…PVNSLIAVLS (77 aa)). N6-lipoyllysine is present on K43. One can recognise a Peripheral subunit-binding (PSBD) domain in the interval 128 to 165 (FASPLAKRLAKIGDIRLENVQGSGPHGRIVKQDILSYD). The active site involves H381.

The protein belongs to the 2-oxoacid dehydrogenase family. In terms of assembly, forms a 24-polypeptide structural core with octahedral symmetry. (R)-lipoate serves as cofactor.

The catalysed reaction is N(6)-[(R)-dihydrolipoyl]-L-lysyl-[protein] + acetyl-CoA = N(6)-[(R)-S(8)-acetyldihydrolipoyl]-L-lysyl-[protein] + CoA. In terms of biological role, the pyruvate dehydrogenase complex catalyzes the overall conversion of pyruvate to acetyl-CoA and CO(2). It contains multiple copies of three enzymatic components: pyruvate dehydrogenase (E1), dihydrolipoamide acetyltransferase (E2) and lipoamide dehydrogenase (E3). This is Dihydrolipoyllysine-residue acetyltransferase component of pyruvate dehydrogenase complex (pdhC) from Rickettsia prowazekii (strain Madrid E).